We begin with the raw amino-acid sequence, 217 residues long: Thymidylate kinase (217 aa).

Residue 7–14 (GIEGAGKS) participates in ATP binding.

The protein belongs to the thymidylate kinase family.

The catalysed reaction is dTMP + ATP = dTDP + ADP. Functionally, phosphorylation of dTMP to form dTDP in both de novo and salvage pathways of dTTP synthesis. This chain is Thymidylate kinase, found in Desulfovibrio desulfuricans (strain ATCC 27774 / DSM 6949 / MB).